We begin with the raw amino-acid sequence, 183 residues long: uncharacterized protein (183 aa).

In terms of domain architecture, GGDEF spans 55–183 (PRAAVLLVDL…RSRRGSRPAR (129 aa)).

Might be involved in pSAM2 replication control. This is an uncharacterized protein from Streptomyces ambofaciens.